Consider the following 181-residue polypeptide: Ribonuclease HII (181 aa).

The region spanning 1–181 is the RNase H type-2 domain; the sequence is MICGIDEVGR…SLHRKSFQLI (181 aa). The a divalent metal cation site is built by Asp-6, Glu-7, and Asp-98.

This sequence belongs to the RNase HII family. It depends on Mn(2+) as a cofactor. Mg(2+) serves as cofactor.

The protein resides in the cytoplasm. It carries out the reaction Endonucleolytic cleavage to 5'-phosphomonoester.. Endonuclease that specifically degrades the RNA of RNA-DNA hybrids. The protein is Ribonuclease HII of Borrelia duttonii (strain Ly).